The sequence spans 710 residues: Putative membrane protein IgaA homolog (710 aa).

Residue methionine 1 is a topological domain, periplasmic. The chain crosses the membrane as a helical span at residues 2–22 (STILIFIAALLACSLLAIWRF). Over 23–204 (RVKSRRGSLP…YALSRPAGLR (182 aa)) the chain is Cytoplasmic. The next 2 membrane-spanning stretches (helical) occupy residues 205 to 225 (EALLIVASFLLFFFCLITPDV) and 226 to 246 (FVPWMIGGAILLLAAGLWGLF). The Cytoplasmic segment spans residues 247–339 (APPSKSALRE…KNFPLQHWLR (93 aa)). Residues 340 to 360 (STVIAIGSLLVLFMLLFWIPL) form a helical membrane-spanning segment. Over 361–656 (DMPIKFTLSW…PDKSGWWRYL (296 aa)) the chain is Periplasmic. The helical transmembrane segment at 657 to 677 (GTTLLMLAMIVSAVYNGIQAF) threads the bilayer. Residues 678–710 (RRYQRHRTRMADIQEYYESCLNPRLTVSPENLI) are Cytoplasmic-facing.

Belongs to the IgaA family.

The protein localises to the cell inner membrane. This is Putative membrane protein IgaA homolog (yrfF) from Salmonella typhi.